A 71-amino-acid polypeptide reads, in one-letter code: Lantibiotic Flvbeta.c (71 aa).

A propeptide spans 1 to 33 (MENKFDMEKFKKLAAVVSEDELDTLLDETTVGA) (cleaved by FlvT). The lanthionine (Ser-Cys); by FlvM2 cross-link spans 35 to 39 (SSNDC). 2,3-didehydroalanine (Ser); by FlvM2 is present on S36. Cross-links (beta-methyllanthionine (Thr-Cys); by FlvM2) lie at residues 54–60 (TSKFDWC), 62–65 (TGAC), and 66–69 (TTSC).

Contains LL-lanthionine and DL-beta-methyllanthionine, when coepressed in E.coli with the flavecin synthetase FlvM2.

The protein resides in the secreted. Its function is as follows. Lanthionine-containing peptide antibiotic (lantibiotic) that is probably active on Gram-positive bacteria, since its analog [Del1]Flvbeta.c shows antibacterial activity against M.luteus. This activity is not synergistically enhanced by [Del2]Flvalpha.a, an analog of Flvalpha.a, which is encoded by the same operon than Flvbeta.c. The bactericidal activity of lantibiotics is based on depolarization of energized bacterial cytoplasmic membranes, initiated by the formation of aqueous transmembrane pores. The protein is Lantibiotic Flvbeta.c of Ruminococcus flavefaciens.